Consider the following 151-residue polypeptide: 3-hydroxyacyl-[acyl-carrier-protein] dehydratase FabZ (151 aa).

The active site involves His-58.

Belongs to the thioester dehydratase family. FabZ subfamily.

The protein resides in the cytoplasm. It catalyses the reaction a (3R)-hydroxyacyl-[ACP] = a (2E)-enoyl-[ACP] + H2O. In terms of biological role, involved in unsaturated fatty acids biosynthesis. Catalyzes the dehydration of short chain beta-hydroxyacyl-ACPs and long chain saturated and unsaturated beta-hydroxyacyl-ACPs. This is 3-hydroxyacyl-[acyl-carrier-protein] dehydratase FabZ from Histophilus somni (strain 129Pt) (Haemophilus somnus).